Here is a 2798-residue protein sequence, read N- to C-terminus: Kinesin-like protein KIN-12F (2798 aa).

The interval 1-165 is disordered; sequence MVRDLAAVRR…RPPMSSGQRG (165 aa). 2 stretches are compositionally biased toward low complexity: residues 8–22 and 31–58; these read VRRT…SSAS and PVDA…QPPQ. A Kinesin motor domain is found at 210-547; it reads NVQVVIRVRP…LKFAQRARLI (338 aa). 291 to 298 contacts ATP; the sequence is GQTGSGKT. The segment covering 600–615 has biased composition (acidic residues); it reads DVDDGTESMNMDEEND. Positions 600–621 are disordered; the sequence is DVDDGTESMNMDEENDNDAHDR. Coiled-coil stretches lie at residues 792 to 835, 890 to 987, 1014 to 1108, 1281 to 1322, and 2130 to 2333; these read ELKR…HSSN, LAEE…HRRQ, LKRM…VMKE, QRAM…LKNE, and ELVD…VRQQ. The interval 2338-2359 is disordered; that stretch reads PSSGQATSSLEGGMGDFTDSSR. Coiled-coil stretches lie at residues 2361-2427 and 2545-2758; these read SREI…VKSD and ESKE…LKLK. Residues 2772–2798 form a disordered region; the sequence is RSESSSLSSGRSRSPSVCRSPSISSFR. Over residues 2774-2798 the composition is skewed to low complexity; the sequence is ESSSLSSGRSRSPSVCRSPSISSFR.

The protein belongs to the TRAFAC class myosin-kinesin ATPase superfamily. Kinesin family. KIN-12 subfamily.

The protein is Kinesin-like protein KIN-12F of Oryza sativa subsp. japonica (Rice).